The sequence spans 448 residues: MAKHRYLPMTEQDEKEMLDVIGVKSIDDLFQDIPEKIRFKRDYDLKPAKSEPALLRELSKLASKNANTAEYASFLGAGVYSHYIPTVVDHVISRSEFYTAYTPYQPEISQGELQAIFEFQTMIAELTGMDLANSSMYDGGTALAEAAMLASGHTKRKKILISGAVHPESSNVLKTYATGQHIEVEVIPEIDGKTDMDALKKALSEDIAGFVVQYPNFYGQVEPLAELEKLIHENNSLLLVSSNPLSLGLLTPPGEFGADIVVGDSQVFGIPESFGGPHCGFFAVTNKLMRKVPGRLVGETVDENGKRGYVLTLQAREQHIRRDKATSNICSNQALNALASSVAMATLGKTGLIEMAKQNLDKSHYAKQKFRENGFEVLFSDGFFNEFVVKLSKPIKEVNESLLDEGIIGGYDLGFYDTKYEKHMLVAVTEMRTKEEIDAFVASLEGVK.

The protein belongs to the GcvP family. N-terminal subunit subfamily. In terms of assembly, the glycine cleavage system is composed of four proteins: P, T, L and H. In this organism, the P 'protein' is a heterodimer of two subunits.

The enzyme catalyses N(6)-[(R)-lipoyl]-L-lysyl-[glycine-cleavage complex H protein] + glycine + H(+) = N(6)-[(R)-S(8)-aminomethyldihydrolipoyl]-L-lysyl-[glycine-cleavage complex H protein] + CO2. In terms of biological role, the glycine cleavage system catalyzes the degradation of glycine. The P protein binds the alpha-amino group of glycine through its pyridoxal phosphate cofactor; CO(2) is released and the remaining methylamine moiety is then transferred to the lipoamide cofactor of the H protein. The sequence is that of Probable glycine dehydrogenase (decarboxylating) subunit 1 from Listeria welshimeri serovar 6b (strain ATCC 35897 / DSM 20650 / CCUG 15529 / CIP 8149 / NCTC 11857 / SLCC 5334 / V8).